Reading from the N-terminus, the 483-residue chain is Proline--tRNA ligase (483 aa).

This sequence belongs to the class-II aminoacyl-tRNA synthetase family. ProS type 3 subfamily. As to quaternary structure, homodimer.

It is found in the cytoplasm. It carries out the reaction tRNA(Pro) + L-proline + ATP = L-prolyl-tRNA(Pro) + AMP + diphosphate. Its function is as follows. Catalyzes the attachment of proline to tRNA(Pro) in a two-step reaction: proline is first activated by ATP to form Pro-AMP and then transferred to the acceptor end of tRNA(Pro). The sequence is that of Proline--tRNA ligase from Mycoplasma genitalium (strain ATCC 33530 / DSM 19775 / NCTC 10195 / G37) (Mycoplasmoides genitalium).